The sequence spans 390 residues: Dual-specificity RNA methyltransferase RlmN (390 aa).

The active-site Proton acceptor is the E110. The Radical SAM core domain occupies 116–355 (EADRATLCVS…VIIRKTRGDD (240 aa)). C123 and C360 are oxidised to a cystine. [4Fe-4S] cluster is bound by residues C130, C134, and C137. S-adenosyl-L-methionine-binding positions include 184 to 185 (GE), S216, 238 to 240 (SLH), and N317. The active-site S-methylcysteine intermediate is the C360.

This sequence belongs to the radical SAM superfamily. RlmN family. [4Fe-4S] cluster serves as cofactor.

The protein localises to the cytoplasm. The catalysed reaction is adenosine(2503) in 23S rRNA + 2 reduced [2Fe-2S]-[ferredoxin] + 2 S-adenosyl-L-methionine = 2-methyladenosine(2503) in 23S rRNA + 5'-deoxyadenosine + L-methionine + 2 oxidized [2Fe-2S]-[ferredoxin] + S-adenosyl-L-homocysteine. It catalyses the reaction adenosine(37) in tRNA + 2 reduced [2Fe-2S]-[ferredoxin] + 2 S-adenosyl-L-methionine = 2-methyladenosine(37) in tRNA + 5'-deoxyadenosine + L-methionine + 2 oxidized [2Fe-2S]-[ferredoxin] + S-adenosyl-L-homocysteine. Specifically methylates position 2 of adenine 2503 in 23S rRNA and position 2 of adenine 37 in tRNAs. m2A2503 modification seems to play a crucial role in the proofreading step occurring at the peptidyl transferase center and thus would serve to optimize ribosomal fidelity. In Haemophilus influenzae (strain ATCC 51907 / DSM 11121 / KW20 / Rd), this protein is Dual-specificity RNA methyltransferase RlmN.